Here is a 307-residue protein sequence, read N- to C-terminus: Cytidine deaminase 7 (307 aa).

CMP/dCMP-type deaminase domains lie at Thr-22–Asp-155 and Ser-185–Glu-307. Residue Asn-63–Glu-65 coordinates substrate. Position 76 (His-76) interacts with Zn(2+). Catalysis depends on Glu-78, which acts as the Proton donor. Residues Cys-111 and Cys-114 each coordinate Zn(2+).

Belongs to the cytidine and deoxycytidylate deaminase family. As to quaternary structure, homodimer. Requires Zn(2+) as cofactor.

It catalyses the reaction cytidine + H2O + H(+) = uridine + NH4(+). The catalysed reaction is 2'-deoxycytidine + H2O + H(+) = 2'-deoxyuridine + NH4(+). Functionally, this enzyme scavenges exogenous and endogenous cytidine and 2'-deoxycytidine for UMP synthesis. This chain is Cytidine deaminase 7 (CDA7), found in Arabidopsis thaliana (Mouse-ear cress).